A 120-amino-acid chain; its full sequence is T-cell receptor beta chain V region PHDS203 (120 aa).

The N-terminal stretch at 1 to 11 (VVLCFLGTGLV) is a signal peptide. Residues 12–106 (DMKVTQMSRY…TSVYFCAQGA (95 aa)) form a v segment region. Residues cysteine 34 and cysteine 102 are joined by a disulfide bond. The segment at 107-120 (PEQYFGPGTRLTVL) is j segment.

The chain is T-cell receptor beta chain V region PHDS203 from Mus musculus (Mouse).